A 461-amino-acid chain; its full sequence is MSVIKEYRTASEVVGPLMIVEQVNNVSYNELVEIQLHNGEIRRGQVLEIHEDKAMVQLFEGSSGINLEKSKIRFAGHALELAVSEDMVGRIFNGMGKPIDGGPDLIPEKYLDIDGQAINPVSRDYPDEFIQTGISSIDHLNTLVRGQKLPVFSGSGLPHNELAAQIARQATVLNSDENFAVVFAAMGITFEEAEFFMEELRKTGAIDRSVLFMNLANDPAIERIATPRIALTAAEYLAFEKDMHVLVIMTDMTNYCEALREVSAARREVPGRRGYPGYLYTNLSTLYERAGRLVGKKGSVTQIPILTMPEDDITHPIPDLTGYITEGQIILSHELYNQGYRPPINVLPSLSRLKDKGSGEGKTRGDHAPTMNQLFAAYAQGKKVEELAVVLGESALSDVDKLYVRFTKRFEEEYINQGFYKNRNIEDTLNLGWELLSILPRTELKRIKDDLLDKYLPLVEV.

Belongs to the ATPase alpha/beta chains family.

Produces ATP from ADP in the presence of a proton gradient across the membrane. The V-type beta chain is a regulatory subunit. The chain is V-type ATP synthase beta chain from Streptococcus pneumoniae serotype 19F (strain G54).